The following is a 229-amino-acid chain: Vacuolar protein-sorting-associated protein 60 (229 aa).

A coiled-coil region spans residues 9-155 (NKKSHDQLLQ…QGDELQEVLA (147 aa)). Phosphoserine is present on Ser12. An interaction with VTA1 region spans residues 128 to 159 (INIDKLQDMQDEMLDLIEQGDELQEVLAMNNN). The segment at 186 to 229 (PTSENSLGNDMPSYLLGANAPPAFIDEEPNLDTEDKNKALESAQ) is disordered. Residues 218–229 (TEDKNKALESAQ) show a composition bias toward basic and acidic residues.

The protein belongs to the SNF7 family. As to quaternary structure, interacts with VTA1; the interaction occurs at he endosomal membrane.

It localises to the endosome membrane. Its subcellular location is the vacuole membrane. Functionally, has a role in a late stage of multivesicular body (MVB) formation. Can stimulate VPS4 ATPase activity via VTA1. The polypeptide is Vacuolar protein-sorting-associated protein 60 (VPS60) (Saccharomyces cerevisiae (strain ATCC 204508 / S288c) (Baker's yeast)).